The primary structure comprises 78 residues: Ferritin light chain (78 aa).

The Ferritin-like diiron domain occupies 1-59; the sequence is EAALHLEKGLNQALVDLHALGSARADPHLCDFLENHFLDEEVKLIKKMGDHLTNLRRLS.

This sequence belongs to the ferritin family. As to quaternary structure, oligomer of 24 subunits. There are two types of subunits: L (light) chain and H (heavy) chain. The major chain can be light or heavy, depending on the species and tissue type. The functional molecule forms a roughly spherical shell with a diameter of 12 nm and contains a central cavity into which the insoluble mineral iron core is deposited. Interacts with NCOA4.

It is found in the cytoplasmic vesicle. The protein resides in the autophagosome. Its subcellular location is the cytoplasm. It localises to the autolysosome. Functionally, stores iron in a soluble, non-toxic, readily available form. Important for iron homeostasis. Iron is taken up in the ferrous form and deposited as ferric hydroxides after oxidation. Also plays a role in delivery of iron to cells. Mediates iron uptake in capsule cells of the developing kidney. Delivery to lysosomes by the cargo receptor NCOA4 for autophagic degradation and release or iron. The protein is Ferritin light chain (FTL) of Sus scrofa (Pig).